We begin with the raw amino-acid sequence, 97 residues long: Translation initiation factor 1A (97 aa).

The S1-like domain occupies 8–82 (IRVRLPDRKK…DRADIVWRYT (75 aa)).

Belongs to the eIF-1A family.

Seems to be required for maximal rate of protein biosynthesis. Enhances ribosome dissociation into subunits and stabilizes the binding of the initiator Met-tRNA(I) to 40 S ribosomal subunits. In Archaeoglobus fulgidus (strain ATCC 49558 / DSM 4304 / JCM 9628 / NBRC 100126 / VC-16), this protein is Translation initiation factor 1A (eIF1A).